The primary structure comprises 64 residues: DNA gyrase inhibitor YacG (64 aa).

Zn(2+)-binding residues include Cys-9, Cys-12, Cys-28, and Cys-32. The disordered stretch occupies residues 45-64; the sequence is KRIPSSGDLSESDDWSEEPK. Positions 54–64 are enriched in acidic residues; sequence SESDDWSEEPK.

This sequence belongs to the DNA gyrase inhibitor YacG family. Interacts with GyrB. The cofactor is Zn(2+).

In terms of biological role, inhibits all the catalytic activities of DNA gyrase by preventing its interaction with DNA. Acts by binding directly to the C-terminal domain of GyrB, which probably disrupts DNA binding by the gyrase. This is DNA gyrase inhibitor YacG from Escherichia fergusonii (strain ATCC 35469 / DSM 13698 / CCUG 18766 / IAM 14443 / JCM 21226 / LMG 7866 / NBRC 102419 / NCTC 12128 / CDC 0568-73).